We begin with the raw amino-acid sequence, 304 residues long: tRNA dimethylallyltransferase (304 aa).

16-23 (GPTASGKS) serves as a coordination point for ATP. 18-23 (TASGKS) is a substrate binding site. 2 interaction with substrate tRNA regions span residues 41-44 (DSMQ) and 165-169 (QRIIR).

It belongs to the IPP transferase family. Monomer. It depends on Mg(2+) as a cofactor.

The catalysed reaction is adenosine(37) in tRNA + dimethylallyl diphosphate = N(6)-dimethylallyladenosine(37) in tRNA + diphosphate. Catalyzes the transfer of a dimethylallyl group onto the adenine at position 37 in tRNAs that read codons beginning with uridine, leading to the formation of N6-(dimethylallyl)adenosine (i(6)A). The polypeptide is tRNA dimethylallyltransferase (Allorhizobium ampelinum (strain ATCC BAA-846 / DSM 112012 / S4) (Agrobacterium vitis (strain S4))).